The primary structure comprises 337 residues: Ribosomal RNA small subunit methyltransferase C (337 aa).

The protein belongs to the methyltransferase superfamily. RsmC family. As to quaternary structure, monomer.

The protein resides in the cytoplasm. The catalysed reaction is guanosine(1207) in 16S rRNA + S-adenosyl-L-methionine = N(2)-methylguanosine(1207) in 16S rRNA + S-adenosyl-L-homocysteine + H(+). Functionally, specifically methylates the guanine in position 1207 of 16S rRNA in the 30S particle. This is Ribosomal RNA small subunit methyltransferase C from Acinetobacter baumannii (strain ATCC 17978 / DSM 105126 / CIP 53.77 / LMG 1025 / NCDC KC755 / 5377).